Here is a 555-residue protein sequence, read N- to C-terminus: CTP synthase (555 aa).

An amidoligase domain region spans residues 1-267; it reads MAKFVFVTGG…CKEVLDCLDL (267 aa). Residue Ser-13 coordinates CTP. Ser-13 contributes to the UTP binding site. ATP-binding positions include 14–19 and Asp-71; that span reads SIGKGI. Positions 71 and 141 each coordinate Mg(2+). CTP is bound by residues 148–150, 188–193, and Lys-224; these read DIE and KTKPTQ. Residues 188-193 and Lys-224 contribute to the UTP site; that span reads KTKPTQ. One can recognise a Glutamine amidotransferase type-1 domain in the interval 292–534; it reads KVALVGKYVQ…IQAAQIRVPS (243 aa). An L-glutamine-binding site is contributed by Gly-354. Cys-381 acts as the Nucleophile; for glutamine hydrolysis in catalysis. L-glutamine contacts are provided by residues 382-385, Glu-405, and Arg-462; that span reads LGMQ. Residues His-507 and Glu-509 contribute to the active site. Residues 536–555 are disordered; the sequence is PSEAFNPQSKIIEKKSLEQQ. Residues 546–555 are compositionally biased toward basic and acidic residues; that stretch reads IIEKKSLEQQ.

This sequence belongs to the CTP synthase family. As to quaternary structure, homotetramer.

The catalysed reaction is UTP + L-glutamine + ATP + H2O = CTP + L-glutamate + ADP + phosphate + 2 H(+). The enzyme catalyses L-glutamine + H2O = L-glutamate + NH4(+). It carries out the reaction UTP + NH4(+) + ATP = CTP + ADP + phosphate + 2 H(+). The protein operates within pyrimidine metabolism; CTP biosynthesis via de novo pathway; CTP from UDP: step 2/2. Allosterically activated by GTP, when glutamine is the substrate; GTP has no effect on the reaction when ammonia is the substrate. The allosteric effector GTP functions by stabilizing the protein conformation that binds the tetrahedral intermediate(s) formed during glutamine hydrolysis. Inhibited by the product CTP, via allosteric rather than competitive inhibition. Catalyzes the ATP-dependent amination of UTP to CTP with either L-glutamine or ammonia as the source of nitrogen. Regulates intracellular CTP levels through interactions with the four ribonucleotide triphosphates. The chain is CTP synthase from Prochlorococcus marinus (strain NATL1A).